A 267-amino-acid polypeptide reads, in one-letter code: NAD kinase 2 (267 aa).

The active-site Proton acceptor is Asp50. Residues 50–51 (DG), Lys55, 122–123 (NE), Arg149, Asp151, 162–167 (TAYNKS), and Ala186 contribute to the NAD(+) site.

The protein belongs to the NAD kinase family. It depends on a divalent metal cation as a cofactor.

The protein localises to the cytoplasm. The catalysed reaction is NAD(+) + ATP = ADP + NADP(+) + H(+). Functionally, involved in the regulation of the intracellular balance of NAD and NADP, and is a key enzyme in the biosynthesis of NADP. Catalyzes specifically the phosphorylation on 2'-hydroxyl of the adenosine moiety of NAD to yield NADP. The protein is NAD kinase 2 of Listeria monocytogenes serovar 1/2a (strain ATCC BAA-679 / EGD-e).